The sequence spans 232 residues: Probable fimbrial chaperone LpfB (232 aa).

A signal peptide spans 1 to 24 (MDRMMKSKFVALALSLFLSQSVLA).

This sequence belongs to the periplasmic pilus chaperone family.

It is found in the periplasm. Functionally, part of the lpfABCC'DE fimbrial operon. LP fimbriae may participate in the interaction with eukaryotic cells by assisting in microcolony formation. The protein is Probable fimbrial chaperone LpfB (lpfB) of Escherichia coli O157:H7.